A 48-amino-acid chain; its full sequence is Gas vesicle protein A (48 aa).

The protein belongs to the gas vesicle GvpA family. As to quaternary structure, the gas vesicle shell is 2 nm thick and consists of a single layer of this protein. It forms helical ribs nearly perpendicular to the long axis of the vesicle.

It localises to the gas vesicle shell. Functionally, gas vesicles are hollow, gas filled proteinaceous nanostructures found in some microorganisms. During planktonic growth they allow positioning of the organism at a favorable depth for light or nutrient acquisition. GvpA forms the protein shell. This chain is Gas vesicle protein A, found in Spirulina sp. (strain CCAP 1475/10).